The chain runs to 177 residues: ATP synthase subunit delta (177 aa).

Belongs to the ATPase delta chain family. In terms of assembly, F-type ATPases have 2 components, F(1) - the catalytic core - and F(0) - the membrane proton channel. F(1) has five subunits: alpha(3), beta(3), gamma(1), delta(1), epsilon(1). F(0) has three main subunits: a(1), b(2) and c(10-14). The alpha and beta chains form an alternating ring which encloses part of the gamma chain. F(1) is attached to F(0) by a central stalk formed by the gamma and epsilon chains, while a peripheral stalk is formed by the delta and b chains.

The protein resides in the cell inner membrane. Its function is as follows. F(1)F(0) ATP synthase produces ATP from ADP in the presence of a proton or sodium gradient. F-type ATPases consist of two structural domains, F(1) containing the extramembraneous catalytic core and F(0) containing the membrane proton channel, linked together by a central stalk and a peripheral stalk. During catalysis, ATP synthesis in the catalytic domain of F(1) is coupled via a rotary mechanism of the central stalk subunits to proton translocation. This protein is part of the stalk that links CF(0) to CF(1). It either transmits conformational changes from CF(0) to CF(1) or is implicated in proton conduction. This chain is ATP synthase subunit delta, found in Shewanella putrefaciens (strain CN-32 / ATCC BAA-453).